The primary structure comprises 388 residues: Succinate--CoA ligase [ADP-forming] subunit beta (388 aa).

Positions 9-244 constitute an ATP-grasp domain; sequence KQLFAEYGLP…PSQDDAREAH (236 aa). ATP is bound by residues lysine 46, 53-55, glutamate 99, threonine 102, and glutamate 107; that span reads GRG. Asparagine 199 and aspartate 213 together coordinate Mg(2+). Residues asparagine 264 and 321–323 contribute to the substrate site; that span reads GIV.

Belongs to the succinate/malate CoA ligase beta subunit family. Heterotetramer of two alpha and two beta subunits. Requires Mg(2+) as cofactor.

The catalysed reaction is succinate + ATP + CoA = succinyl-CoA + ADP + phosphate. It carries out the reaction GTP + succinate + CoA = succinyl-CoA + GDP + phosphate. It functions in the pathway carbohydrate metabolism; tricarboxylic acid cycle; succinate from succinyl-CoA (ligase route): step 1/1. In terms of biological role, succinyl-CoA synthetase functions in the citric acid cycle (TCA), coupling the hydrolysis of succinyl-CoA to the synthesis of either ATP or GTP and thus represents the only step of substrate-level phosphorylation in the TCA. The beta subunit provides nucleotide specificity of the enzyme and binds the substrate succinate, while the binding sites for coenzyme A and phosphate are found in the alpha subunit. The sequence is that of Succinate--CoA ligase [ADP-forming] subunit beta from Pseudomonas paraeruginosa (strain DSM 24068 / PA7) (Pseudomonas aeruginosa (strain PA7)).